Here is a 156-residue protein sequence, read N- to C-terminus: Small ribosomal subunit protein uS7c (156 aa).

This sequence belongs to the universal ribosomal protein uS7 family. Part of the 30S ribosomal subunit.

The protein resides in the plastid. It is found in the chloroplast. In terms of biological role, one of the primary rRNA binding proteins, it binds directly to 16S rRNA where it nucleates assembly of the head domain of the 30S subunit. This Bowenia serrulata (Byfield fern) protein is Small ribosomal subunit protein uS7c (rps7).